A 172-amino-acid polypeptide reads, in one-letter code: uncharacterized protein (172 aa).

The protein belongs to the archaeal NMN adenylyltransferase family.

This is an uncharacterized protein from Aeropyrum pernix (strain ATCC 700893 / DSM 11879 / JCM 9820 / NBRC 100138 / K1).